We begin with the raw amino-acid sequence, 1598 residues long: Structural maintenance of chromosomes flexible hinge domain-containing protein GMI1 (1598 aa).

Positions 1191-1218 (VTSAPTSEREESGYSTPHSKTTPPPESG) are disordered. Coiled-coil stretches lie at residues 1258–1301 (TEDL…ASLE) and 1565–1595 (EEMM…FTAM).

As to expression, highly expressed in closed buds and open flowers. Expressed at low levels in roots, stems, cauline leaves and siliques. Expressed in the region of the shoot and floral meristems.

Its subcellular location is the nucleus. Contributes to DNA double-strand break (DSB) repair via somatic homologous recombination. Functions downstream of ATM. This chain is Structural maintenance of chromosomes flexible hinge domain-containing protein GMI1, found in Arabidopsis thaliana (Mouse-ear cress).